The following is a 393-amino-acid chain: Acetylornithine aminotransferase (393 aa).

Residues 95–96 (GA) and F127 each bind pyridoxal 5'-phosphate. R130 is a N(2)-acetyl-L-ornithine binding site. Position 214–217 (214–217 (DEVQ)) interacts with pyridoxal 5'-phosphate. At K243 the chain carries N6-(pyridoxal phosphate)lysine. S271 contributes to the N(2)-acetyl-L-ornithine binding site. Residue T272 coordinates pyridoxal 5'-phosphate.

It belongs to the class-III pyridoxal-phosphate-dependent aminotransferase family. ArgD subfamily. In terms of assembly, homodimer. Requires pyridoxal 5'-phosphate as cofactor.

It localises to the cytoplasm. The enzyme catalyses N(2)-acetyl-L-ornithine + 2-oxoglutarate = N-acetyl-L-glutamate 5-semialdehyde + L-glutamate. The protein operates within amino-acid biosynthesis; L-arginine biosynthesis; N(2)-acetyl-L-ornithine from L-glutamate: step 4/4. In Nitrosomonas europaea (strain ATCC 19718 / CIP 103999 / KCTC 2705 / NBRC 14298), this protein is Acetylornithine aminotransferase.